The primary structure comprises 429 residues: Putative GMP synthase [glutamine-hydrolyzing] (429 aa).

A Glutamine amidotransferase type-1 domain is found at 10-118 (TIFILDFGSQ…GYTPIHLYPC (109 aa)). Residue Cys-87 is the Nucleophile of the active site. The 186-residue stretch at 119–304 (ELFKHIVDCE…LGLSSYLLDR (186 aa)) folds into the GMPS ATP-PPase domain. Catalysis depends on residues His-176 and Glu-178.

Homodimer.

It catalyses the reaction XMP + L-glutamine + ATP + H2O = GMP + L-glutamate + AMP + diphosphate + 2 H(+). It functions in the pathway purine metabolism; GMP biosynthesis; GMP from XMP (L-Gln route): step 1/1. Catalyzes the synthesis of GMP from XMP. The chain is Putative GMP synthase [glutamine-hydrolyzing] (guaA) from Chlamydia pneumoniae (Chlamydophila pneumoniae).